A 131-amino-acid polypeptide reads, in one-letter code: Small ribosomal subunit protein uS10m (131 aa).

It belongs to the universal ribosomal protein uS10 family.

The protein resides in the mitochondrion. The sequence is that of Small ribosomal subunit protein uS10m (mrps10) from Dictyostelium discoideum (Social amoeba).